Reading from the N-terminus, the 297-residue chain is tRNA (guanine-N(7)-)-methyltransferase (297 aa).

4 residues coordinate S-adenosyl-L-methionine: Glu-22, Glu-47, Asp-74, and Asp-97. Residue Asp-97 is part of the active site. Substrate-binding positions include Lys-101, Asp-133, and 165–168 (TKYE).

Belongs to the class I-like SAM-binding methyltransferase superfamily. TrmB family.

It catalyses the reaction guanosine(46) in tRNA + S-adenosyl-L-methionine = N(7)-methylguanosine(46) in tRNA + S-adenosyl-L-homocysteine. Its pathway is tRNA modification; N(7)-methylguanine-tRNA biosynthesis. In terms of biological role, catalyzes the formation of N(7)-methylguanine at position 46 (m7G46) in tRNA. The polypeptide is tRNA (guanine-N(7)-)-methyltransferase (Aquifex aeolicus (strain VF5)).